The following is a 227-amino-acid chain: AN1-type zinc finger protein 3 (227 aa).

An A20-type zinc finger spans residues 12–44 (PSLPPRCPCGFWGSSKTMNLCSKCFADFQKKQP). Residues Cys-18, Cys-20, Cys-32, and Cys-35 each coordinate Zn(2+). 2 disordered regions span residues 41-99 (KKQP…TEEC) and 113-151 (PTKR…RSKQ). 2 stretches are compositionally biased toward low complexity: residues 49 to 59 (TPSTSNSQSDL) and 66 to 77 (SDNNNTSVTTPT). Composition is skewed to polar residues over residues 78-96 (LSPS…SPST) and 113-127 (PTKR…SENE). Residues 135–148 (RLVENPERPEESGR) are compositionally biased toward basic and acidic residues. The AN1-type zinc-finger motif lies at 151 to 200 (QKSRRRCFQCQTKLELVQQELGSCRCGYVFCMLHRLPEQHDCTFDHMGRG). Residues Cys-157, Cys-160, Cys-174, Cys-176, Cys-181, His-184, His-190, and Cys-192 each coordinate Zn(2+).

In terms of tissue distribution, expressed in testis.

This is AN1-type zinc finger protein 3 (Zfand3) from Mus musculus (Mouse).